The following is a 261-amino-acid chain: MVKLNQLRKDNPLIICITNDVVKNFTANGLLALGASPAMATERQEMDEFLAHAGALLINIGSIEEGDKENMLQAAAFANKHHVPIVLDPVACGASKFRKDFCLRLLNEHHISIIRGNASELAALTDDATMKGTDADQSLSTESVARRAYDKFKTAIIATGAVDAICQDEQIMLVENGTPMLTKVTGGGCLLGAVVASFIYNETKPSLALLTEAIATYTIAAERAAHSANGTLPGHFAVNLIDQLYLIQQDDIAKESRVKEV.

Residue Met-39 coordinates substrate. Residues Arg-115 and Thr-159 each contribute to the ATP site. Gly-186 is a binding site for substrate.

Belongs to the Thz kinase family. Mg(2+) is required as a cofactor.

The catalysed reaction is 5-(2-hydroxyethyl)-4-methylthiazole + ATP = 4-methyl-5-(2-phosphooxyethyl)-thiazole + ADP + H(+). Its pathway is cofactor biosynthesis; thiamine diphosphate biosynthesis; 4-methyl-5-(2-phosphoethyl)-thiazole from 5-(2-hydroxyethyl)-4-methylthiazole: step 1/1. Functionally, catalyzes the phosphorylation of the hydroxyl group of 4-methyl-5-beta-hydroxyethylthiazole (THZ). The protein is Hydroxyethylthiazole kinase of Macrococcus caseolyticus (strain JCSC5402) (Macrococcoides caseolyticum).